Reading from the N-terminus, the 246-residue chain is MYLLVDVGNTHSVFSITEDGKTFRRWRLSTGVFQTEDELFSHLHPLLGDAMREIKGIGVASVVPTQNTVIERFSQKYFHISPIWVKAKNGCVKWNVKNPSEVGADRVANVVAFVKEYGKNGIIIDMGTATTVDLVVNGSYEGGAILPGFFMMVHSLFRGTAKLPLVEVKPADFVVGKDTEENIRLGVVNGSVYALEGIIGRIKEVYGDLPVVLTGGQSKIVKDMIKHEIFDEDLTIKGVYHFCFGD.

Residue 6-13 (DVGNTHSV) participates in ATP binding. Residue 103–106 (GADR) coordinates substrate. Asp105 functions as the Proton acceptor in the catalytic mechanism. A K(+)-binding site is contributed by Asp125. Thr128 lines the ATP pocket. Thr179 provides a ligand contact to substrate.

This sequence belongs to the type III pantothenate kinase family. Homodimer. Requires NH4(+) as cofactor. It depends on K(+) as a cofactor.

It localises to the cytoplasm. The enzyme catalyses (R)-pantothenate + ATP = (R)-4'-phosphopantothenate + ADP + H(+). The protein operates within cofactor biosynthesis; coenzyme A biosynthesis; CoA from (R)-pantothenate: step 1/5. Functionally, catalyzes the phosphorylation of pantothenate (Pan), the first step in CoA biosynthesis. In Thermotoga maritima (strain ATCC 43589 / DSM 3109 / JCM 10099 / NBRC 100826 / MSB8), this protein is Type III pantothenate kinase (coaX).